The following is a 318-amino-acid chain: MVKRQFDYEQKVQEIREKLEELNNLSSNMEFDLSQEIESLEEKIENNRERRYKNLSPWEKVLLSRHPERPNSNDYIRYFCEEWIELHGDRHFGDDSSVIGGIGRFNGQAVTILGYRKGKDTRENLQYNFGMPHPEGYRKIQRLLLQAEKFQRPVITLIDTPGAYPGIGAEERGQAWAISQVLMTLSALEVPVIAVVSGEGGSGGALALAVADRLLMLSNAVFSVASPEACASILWKELERVEDMARAMKITANDLQRLGIVDEIIEEPLGGAHLNFPEMAEKLKKALQKHLGEILSQDSGELLEERFQKLRKIGEFRG.

The region spanning 32-293 is the CoA carboxyltransferase C-terminal domain; that stretch reads DLSQEIESLE…KKALQKHLGE (262 aa).

It belongs to the AccA family. Acetyl-CoA carboxylase is a heterohexamer composed of biotin carboxyl carrier protein (AccB), biotin carboxylase (AccC) and two subunits each of ACCase subunit alpha (AccA) and ACCase subunit beta (AccD).

It localises to the cytoplasm. The enzyme catalyses N(6)-carboxybiotinyl-L-lysyl-[protein] + acetyl-CoA = N(6)-biotinyl-L-lysyl-[protein] + malonyl-CoA. It participates in lipid metabolism; malonyl-CoA biosynthesis; malonyl-CoA from acetyl-CoA: step 1/1. In terms of biological role, component of the acetyl coenzyme A carboxylase (ACC) complex. First, biotin carboxylase catalyzes the carboxylation of biotin on its carrier protein (BCCP) and then the CO(2) group is transferred by the carboxyltransferase to acetyl-CoA to form malonyl-CoA. The protein is Acetyl-coenzyme A carboxylase carboxyl transferase subunit alpha of Syntrophomonas wolfei subsp. wolfei (strain DSM 2245B / Goettingen).